We begin with the raw amino-acid sequence, 394 residues long: Dihydroorotase (394 aa).

Zn(2+)-binding residues include histidine 15, histidine 17, lysine 98, histidine 135, histidine 175, and aspartate 245. Lysine 98 carries the post-translational modification N6-carboxylysine.

The protein belongs to the metallo-dependent hydrolases superfamily. DHOase family. Class II DHOase subfamily. Zn(2+) is required as a cofactor.

The enzyme catalyses (S)-dihydroorotate + H2O = N-carbamoyl-L-aspartate + H(+). Its pathway is pyrimidine metabolism; UMP biosynthesis via de novo pathway; (S)-dihydroorotate from bicarbonate: step 3/3. The polypeptide is Dihydroorotase (PYR3) (Mycosarcoma maydis (Corn smut fungus)).